The following is a 261-amino-acid chain: Protein TfpB (261 aa).

The protein is Protein TfpB (tfpB) of Moraxella bovis.